Reading from the N-terminus, the 207-residue chain is Outer-membrane lipoprotein LolB (207 aa).

The N-terminal stretch at 1–21 (MPQRKISFYRLLPLATLLLAA) is a signal peptide. A lipid anchor (N-palmitoyl cysteine) is attached at Cys22. Cys22 is lipidated: S-diacylglycerol cysteine.

This sequence belongs to the LolB family. As to quaternary structure, monomer.

It localises to the cell outer membrane. Functionally, plays a critical role in the incorporation of lipoproteins in the outer membrane after they are released by the LolA protein. The sequence is that of Outer-membrane lipoprotein LolB from Yersinia enterocolitica serotype O:8 / biotype 1B (strain NCTC 13174 / 8081).